Reading from the N-terminus, the 225-residue chain is uncharacterized protein (225 aa).

N-linked (GlcNAc...) asparagine; by host glycosylation is found at asparagine 48, asparagine 58, asparagine 105, and asparagine 108. Residues 156-178 (LWGYLKQPLVMVGIAAVVGYLIY) form a helical membrane-spanning segment.

The protein belongs to the ascovirus HvAv ORF58 family.

It is found in the membrane. This is an uncharacterized protein from Heliothis virescens ascovirus 3e (HvAV-3e).